The following is a 96-amino-acid chain: Co-chaperonin GroES (96 aa).

The protein belongs to the GroES chaperonin family. Heptamer of 7 subunits arranged in a ring. Interacts with the chaperonin GroEL.

The protein resides in the cytoplasm. Functionally, together with the chaperonin GroEL, plays an essential role in assisting protein folding. The GroEL-GroES system forms a nano-cage that allows encapsulation of the non-native substrate proteins and provides a physical environment optimized to promote and accelerate protein folding. GroES binds to the apical surface of the GroEL ring, thereby capping the opening of the GroEL channel. The protein is Co-chaperonin GroES of Verminephrobacter eiseniae (strain EF01-2).